Consider the following 161-residue polypeptide: Globin CTT-VIIB-8 (161 aa).

Residues 1 to 16 (MKFFAVLALCIVGAIA) form the signal peptide. Residues 18–161 (PLTADEASLV…NTYAIVVPRL (144 aa)) enclose the Globin domain. H76 and H111 together coordinate heme b.

It belongs to the globin family. Homodimer.

The protein is Globin CTT-VIIB-8 (CTT-7B8) of Chironomus thummi thummi (Midge).